A 597-amino-acid polypeptide reads, in one-letter code: Probable HECT-type ubiquitin ligase-interacting protein creD (597 aa).

Disordered regions lie at residues 375 to 398 (ELDPNGYRTPGPGSGPGTPFGTLS) and 432 to 499 (LNIT…MATP). The segment covering 443–455 (TDHESQNDSEHRR) has biased composition (basic and acidic residues). Over residues 465 to 481 (PSSGSNSHSPSSPVLSR) the composition is skewed to low complexity. Basic and acidic residues predominate over residues 482-492 (RPSDEVDHEHV).

Belongs to the arrestin family. Interacts with hulA.

Functionally, component of the regulatory network controlling carbon source utilization through ubiquitination and deubiquitination involving creA, creB, creC, creD and acrB. May be involved in signaling by recognizing appropriately phosphorylated substrates via its arrestin domains and then recruit a HECT-type ubiquitin ligase such as hulA, leading to ubiquitination of the substrate, providing a link between ubiquitination and phosphorylation in protein regulation and stability. The polypeptide is Probable HECT-type ubiquitin ligase-interacting protein creD (creD) (Aspergillus oryzae (strain ATCC 42149 / RIB 40) (Yellow koji mold)).